The following is a 188-amino-acid chain: ATP-dependent protease subunit HslV (188 aa).

The active site involves threonine 7. Residues glycine 162, cysteine 165, and serine 168 each contribute to the Na(+) site.

Belongs to the peptidase T1B family. HslV subfamily. In terms of assembly, a double ring-shaped homohexamer of HslV is capped on each side by a ring-shaped HslU homohexamer. The assembly of the HslU/HslV complex is dependent on binding of ATP.

Its subcellular location is the cytoplasm. It carries out the reaction ATP-dependent cleavage of peptide bonds with broad specificity.. Its activity is regulated as follows. Allosterically activated by HslU binding. In terms of biological role, protease subunit of a proteasome-like degradation complex believed to be a general protein degrading machinery. This chain is ATP-dependent protease subunit HslV, found in Thiobacillus denitrificans (strain ATCC 25259 / T1).